A 471-amino-acid chain; its full sequence is Venom prothrombin activator vestarin-D2 (471 aa).

The signal sequence occupies residues 1-20; the sequence is MAPQLLLCLILTFLWSLPEA. A propeptide spanning residues 21-40 is cleaved from the precursor; sequence ESNVFLKSNVANRFLQRTKR. Positions 41–86 constitute a Gla domain; the sequence is ANSIFEEIRPGNIERECVEEKCSKEEAREVFQDNEKTEAFWTVYVD. 4-carboxyglutamate is present on residues Glu46, Glu47, Glu54, Glu56, Glu59, Glu60, Glu65, Glu66, Glu69, and Glu75. Cys57 and Cys62 are oxidised to a cystine. Positions 86–122 constitute an EGF-like 1; calcium-binding domain; that stretch reads DGDQCLSNPCHYRGTCKDGIGSYTCTCLPGYEGKNCE. 10 disulfides stabilise this stretch: Cys90–Cys101, Cys95–Cys110, Cys112–Cys121, Cys129–Cys140, Cys136–Cys149, Cys151–Cys164, Cys172–Cys333, Cys233–Cys238, Cys381–Cys395, and Cys406–Cys434. Ser92 carries an O-linked (Hex...) serine glycan. The region spanning 129–164 is the EGF-like 2 domain; sequence CRLFNGNCWHFCKTVQNDTQCSCAEGYRLGVDGFSC. Positions 182 to 226 are cleaved as a propeptide — activation peptide; that stretch reads REASLPDFHFSDDYDAIDENNLVETVQSQSATLLKKSDNPSPDIR. One can recognise a Peptidase S1 domain in the interval 227–458; the sequence is IVSGLDCKLG…FIPWIKTIMR (232 aa). The active-site Charge relay system is His268. Asn271 carries an N-linked (GlcNAc...) asparagine glycan. The Charge relay system role is filled by Asp313. Ser410 serves as the catalytic Charge relay system.

This sequence belongs to the peptidase S1 family. Snake venom subfamily. In terms of assembly, heterodimer of a light chain and a heavy chain; disulfide-linked. The vitamin K-dependent, enzymatic carboxylation of some glutamate residues allows the modified protein to bind calcium. Expressed by the venom gland.

It localises to the secreted. It catalyses the reaction Selective cleavage of Arg-|-Thr and then Arg-|-Ile bonds in prothrombin to form thrombin.. Its function is as follows. Snake prothrombin activator that attacks the hemostatic system of prey. This protein is functionally similar to blood coagulation factor Xa. The polypeptide is Venom prothrombin activator vestarin-D2 (Demansia vestigiata (Lesser black whip snake)).